The chain runs to 149 residues: Oligosaccharyltransferase complex subunit OSTC (149 aa).

Residues 1–32 (METLFRLPFAVLECPNIKLKRPGWVHMPSAMT) lie on the Cytoplasmic side of the membrane. A helical membrane pass occupies residues 33–53 (VYALVVVSYFLITGGIIYDVI). The Extracellular portion of the chain corresponds to 54–83 (VEPPSVGSMTDEHGHQRPVAFLAYRVNGQY). The helical transmembrane segment at 84 to 104 (IMEGLASSFLFTMGGLGFIIL) threads the bilayer. Topologically, residues 105–117 (DRSNAPNIPKLNR) are cytoplasmic. The helical transmembrane segment at 118–138 (FLLLFIGFVSVLLSFFMARVF) threads the bilayer. The Extracellular portion of the chain corresponds to 139 to 149 (MRMKLPGYLMG).

This sequence belongs to the OSTC family. Specific component of the STT3A-containing form of the oligosaccharyltransferase (OST) complex.

It localises to the membrane. Its pathway is protein modification; protein glycosylation. Its function is as follows. Specific component of the STT3A-containing form of the oligosaccharyl transferase (OST) complex that catalyzes the initial transfer of a defined glycan (Glc(3)Man(9)GlcNAc(2) in eukaryotes) from the lipid carrier dolichol-pyrophosphate to an asparagine residue within an Asn-X-Ser/Thr consensus motif in nascent polypeptide chains, the first step in protein N-glycosylation. N-glycosylation occurs cotranslationally and the complex associates with the Sec61 complex at the channel-forming translocon complex that mediates protein translocation across the endoplasmic reticulum (ER). All subunits are required for a maximal enzyme activity. This is Oligosaccharyltransferase complex subunit OSTC from Gallus gallus (Chicken).